We begin with the raw amino-acid sequence, 548 residues long: Isocitrate dehydrogenase [NAD(+)] 1, mitochondrial (548 aa).

A mitochondrion-targeting transit peptide spans 1 to 53 (MSSLSTLRILHSTAGRRWASYYGIYPKSAACSSSSVAIARFFSTAADRPPKHA). Residues 132 to 134 (TIT) and N153 each bind NAD(+). Residues 151–157 (SPNGAMR), R187, Y194, K266, D311, and D335 each bind D-threo-isocitrate. Positions 311, 335, and 339 each coordinate Mg(2+). NAD(+)-binding positions include 372 to 377 (HGTVSD) and N391. Positions 499 to 534 (IDEEAINGLFQKYDKNGDGFIDFEEFTRMLVKMNLA) constitute an EF-hand domain. The Ca(2+) site is built by D512, N514, D516, F518, and E523.

The protein belongs to the isocitrate and isopropylmalate dehydrogenases family. Homodimer. Requires Mg(2+) as cofactor. Mn(2+) is required as a cofactor.

It is found in the mitochondrion. The enzyme catalyses D-threo-isocitrate + NAD(+) = 2-oxoglutarate + CO2 + NADH. Its activity is regulated as follows. The homodimer exhibits allosteric regulation by isocitrate. Activated by Mn(2+) and Mg(2+). No activation by Na(+), K(+) or Li(+). Inhibited by Co(2+), Cu(2+) and Ni(2+), but not with Ca(2+) in the presence of Mn(2+) or Mg(2+). Competitively inhibited by NADH, but no effect on activity by 1.0 mM citrate. Strongly inhibited by excess ATP, ADP, AMP and alpha-ketoglutarate. Functionally, performs an essential role in the oxidative function of the tricarboxylic acid cycle and respiration. Catalyzes the decarboxylation of isocitrate to produce 2-oxoglutarate and generate NADH to provide electrons for energy production. No activity with NADP(+). In Phaeodactylum tricornutum (strain CCAP 1055/1), this protein is Isocitrate dehydrogenase [NAD(+)] 1, mitochondrial.